A 161-amino-acid polypeptide reads, in one-letter code: TRAF-interacting protein with FHA domain-containing protein B (161 aa).

One can recognise an FHA domain in the interval 36–91; the sequence is LLLGRGQDAHLQLQLPRLSRRHLSLEPYLEKGSALLAFCLKALSRKGCVWVNGLTL.

In terms of assembly, interacts with TIFA.

Inhibits TIFA-mediated TRAF6 activation possibly by inducing a conformational change in TIFA. This Homo sapiens (Human) protein is TRAF-interacting protein with FHA domain-containing protein B.